Reading from the N-terminus, the 325-residue chain is Replication factor C small subunit (325 aa).

ATP is bound at residue 52-59 (GPAGVGKT).

It belongs to the activator 1 small subunits family. RfcS subfamily. Heteromultimer composed of small subunits (RfcS) and large subunits (RfcL).

Its function is as follows. Part of the RFC clamp loader complex which loads the PCNA sliding clamp onto DNA. The protein is Replication factor C small subunit of Natronomonas pharaonis (strain ATCC 35678 / DSM 2160 / CIP 103997 / JCM 8858 / NBRC 14720 / NCIMB 2260 / Gabara) (Halobacterium pharaonis).